The primary structure comprises 75 residues: Beta-defensin 30 (75 aa).

Residues 1–22 (MGSLQLILVLFVLLSDVPPVRS) form the signal peptide. 3 disulfides stabilise this stretch: C35/C62, C42/C56, and C46/C63.

This sequence belongs to the beta-defensin family.

Its subcellular location is the secreted. Functionally, has antibacterial activity. In Rattus norvegicus (Rat), this protein is Beta-defensin 30 (Defb30).